We begin with the raw amino-acid sequence, 268 residues long: Homeobox protein Hox-D12 (268 aa).

The interval 102 to 124 (TPDAPTASEERSRTRPPFAPESS) is disordered. A DNA-binding region (homeobox) is located at residues 200 to 259 (ARKKRKPYTKQQIAELENEFLVNEFINRQKRKELSNRLNLSDQQVKIWFQNRRMKKKRVV).

This sequence belongs to the Abd-B homeobox family.

It is found in the nucleus. Functionally, sequence-specific transcription factor which is part of a developmental regulatory system that provides cells with specific positional identities on the anterior-posterior axis. The chain is Homeobox protein Hox-D12 (Hoxd12) from Mus musculus (Mouse).